A 1501-amino-acid polypeptide reads, in one-letter code: Inactive protein tyrosine kinase pTKL (1501 aa).

3 N-linked (GlcNAc...) asparagine glycosylation sites follow: Asn64, Asn128, and Asn133. Over residues 204–221 (KKNKKNKKNKKKKNKKTK) the composition is skewed to basic residues. The segment at 204-223 (KKNKKNKKNKKKKNKKTKNT) is disordered. Asn239, Asn242, Asn258, and Asn327 each carry an N-linked (GlcNAc...) asparagine glycan. Residues 257–273 (MNISLHEKNDKKNEKKN) are compositionally biased toward basic and acidic residues. A disordered region spans residues 257-276 (MNISLHEKNDKKNEKKNEKK). The SAM domain occupies 301–366 (WSLREVIQWL…LQLIKNLQVM (66 aa)). The interval 392 to 425 (NKNIKKGKNIKKEKKKKKEKNIKKEKKKKKKETK) is disordered. A compositionally biased stretch (basic residues) spans 394–424 (NIKKGKNIKKEKKKKKEKNIKKEKKKKKKET). Residues 399 to 433 (KNIKKEKKKKKEKNIKKEKKKKKKETKKFNNMDKK) are a coiled coil. 3 N-linked (GlcNAc...) asparagine glycosylation sites follow: Asn448, Asn463, and Asn471. The RVxF motif 1 signature appears at 483 to 486 (KVSF). N-linked (GlcNAc...) asparagine glycosylation occurs at Asn506. A compositionally biased stretch (low complexity) spans 543 to 597 (QLSSPLSSPLSSPSPSSSPSSSPSSSPSSSPSSSPSPSSSPSPSSSPSSSPSSSP). Positions 543–607 (QLSSPLSSPL…SSPPSPLSYK (65 aa)) are disordered. Asn652 carries N-linked (GlcNAc...) asparagine glycosylation. Residues 659–678 (IKKSKSKYNNDKKEQKKLPL) are disordered. Residues 666-675 (YNNDKKEQKK) show a composition bias toward basic and acidic residues. Residues Asn681, Asn712, Asn737, Asn811, and Asn819 are each glycosylated (N-linked (GlcNAc...) asparagine). ATP-binding positions include 836–844 (QNINNFGKY) and Lys864. 4 N-linked (GlcNAc...) asparagine glycosylation sites follow: Asn1024, Asn1031, Asn1074, and Asn1157. The region spanning 1088 to 1483 (FHYQHNVLCG…HILKTISTLY (396 aa)) is the Protein kinase domain. An RVxF motif 2 motif is present at residues 1238-1241 (KVLF). Asn1382 carries N-linked (GlcNAc...) asparagine glycosylation.

The protein belongs to the protein kinase superfamily. TKL Ser/Thr protein kinase family. Interacts (via RVxF motif 1 and/or 2) with phosphatase PP1C. May interact (via SAM domain) with SERA5 (via C-terminus).

The protein localises to the parasitophorous vacuole. It localises to the host cell membrane. It is found in the host cytoplasm. The protein resides in the host cytoskeleton. The sequence is that of Inactive protein tyrosine kinase pTKL from Plasmodium falciparum (isolate 3D7).